Consider the following 95-residue polypeptide: YcgL domain-containing protein APJL_0712 (95 aa).

One can recognise a YcgL domain in the interval His-4–Leu-88.

In Actinobacillus pleuropneumoniae serotype 3 (strain JL03), this protein is YcgL domain-containing protein APJL_0712.